A 336-amino-acid polypeptide reads, in one-letter code: Holliday junction branch migration complex subunit RuvB (336 aa).

Positions 1-182 are large ATPase domain (RuvB-L); the sequence is MKERIVNLET…FGMSFRMQFY (182 aa). ATP is bound by residues Leu21, Arg22, Gly63, Lys66, Thr67, Ser68, 129-131, Arg172, Tyr182, and Arg219; that span reads EDF. Thr67 is a binding site for Mg(2+). The interval 183–253 is small ATPAse domain (RuvB-S); sequence NPSELALIIK…ITLHALNELG (71 aa). The tract at residues 256–336 is head domain (RuvB-H); the sequence is ELGFDEADLA…IPTLNPQTLF (81 aa). DNA is bound by residues Arg310 and Arg315.

Belongs to the RuvB family. As to quaternary structure, homohexamer. Forms an RuvA(8)-RuvB(12)-Holliday junction (HJ) complex. HJ DNA is sandwiched between 2 RuvA tetramers; dsDNA enters through RuvA and exits via RuvB. An RuvB hexamer assembles on each DNA strand where it exits the tetramer. Each RuvB hexamer is contacted by two RuvA subunits (via domain III) on 2 adjacent RuvB subunits; this complex drives branch migration. In the full resolvosome a probable DNA-RuvA(4)-RuvB(12)-RuvC(2) complex forms which resolves the HJ.

It localises to the cytoplasm. The enzyme catalyses ATP + H2O = ADP + phosphate + H(+). Functionally, the RuvA-RuvB-RuvC complex processes Holliday junction (HJ) DNA during genetic recombination and DNA repair, while the RuvA-RuvB complex plays an important role in the rescue of blocked DNA replication forks via replication fork reversal (RFR). RuvA specifically binds to HJ cruciform DNA, conferring on it an open structure. The RuvB hexamer acts as an ATP-dependent pump, pulling dsDNA into and through the RuvAB complex. RuvB forms 2 homohexamers on either side of HJ DNA bound by 1 or 2 RuvA tetramers; 4 subunits per hexamer contact DNA at a time. Coordinated motions by a converter formed by DNA-disengaged RuvB subunits stimulates ATP hydrolysis and nucleotide exchange. Immobilization of the converter enables RuvB to convert the ATP-contained energy into a lever motion, pulling 2 nucleotides of DNA out of the RuvA tetramer per ATP hydrolyzed, thus driving DNA branch migration. The RuvB motors rotate together with the DNA substrate, which together with the progressing nucleotide cycle form the mechanistic basis for DNA recombination by continuous HJ branch migration. Branch migration allows RuvC to scan DNA until it finds its consensus sequence, where it cleaves and resolves cruciform DNA. In Helicobacter pylori (strain ATCC 700392 / 26695) (Campylobacter pylori), this protein is Holliday junction branch migration complex subunit RuvB.